Reading from the N-terminus, the 408-residue chain is 1-deoxy-D-xylulose 5-phosphate reductoisomerase (408 aa).

Thr27, Gly28, Ser29, Ile30, Ala53, Arg54, Asn55, and Asn140 together coordinate NADPH. Residue Lys141 participates in 1-deoxy-D-xylulose 5-phosphate binding. Glu142 contributes to the NADPH binding site. A Mn(2+)-binding site is contributed by Asp166. 1-deoxy-D-xylulose 5-phosphate-binding residues include Ser167, Glu168, Ser192, and His215. Glu168 serves as a coordination point for Mn(2+). Residue Gly221 coordinates NADPH. 1-deoxy-D-xylulose 5-phosphate contacts are provided by Ser228, Asn233, Lys234, and Glu237. Residue Glu237 coordinates Mn(2+).

Belongs to the DXR family. Mg(2+) is required as a cofactor. It depends on Mn(2+) as a cofactor.

The enzyme catalyses 2-C-methyl-D-erythritol 4-phosphate + NADP(+) = 1-deoxy-D-xylulose 5-phosphate + NADPH + H(+). It functions in the pathway isoprenoid biosynthesis; isopentenyl diphosphate biosynthesis via DXP pathway; isopentenyl diphosphate from 1-deoxy-D-xylulose 5-phosphate: step 1/6. Its function is as follows. Catalyzes the NADPH-dependent rearrangement and reduction of 1-deoxy-D-xylulose-5-phosphate (DXP) to 2-C-methyl-D-erythritol 4-phosphate (MEP). The sequence is that of 1-deoxy-D-xylulose 5-phosphate reductoisomerase from Nitratidesulfovibrio vulgaris (strain ATCC 29579 / DSM 644 / CCUG 34227 / NCIMB 8303 / VKM B-1760 / Hildenborough) (Desulfovibrio vulgaris).